Consider the following 80-residue polypeptide: MCSISFLVLVSISFSMFLLSLNFMLNEYCVFLEWEVVSLNSSGIVMTFLFDWMSLLFMSFVLLISSLVIYYSKEYINSSY.

Transmembrane regions (helical) follow at residues 4-24 and 44-64; these read ISFL…LNFM and IVMT…VLLI.

It belongs to the complex I subunit 5 family.

It localises to the mitochondrion inner membrane. It carries out the reaction a ubiquinone + NADH + 5 H(+)(in) = a ubiquinol + NAD(+) + 4 H(+)(out). Core subunit of the mitochondrial membrane respiratory chain NADH dehydrogenase (Complex I) that is believed to belong to the minimal assembly required for catalysis. Complex I functions in the transfer of electrons from NADH to the respiratory chain. The immediate electron acceptor for the enzyme is believed to be ubiquinone. In Ceratitis capitata (Mediterranean fruit fly), this protein is NADH-ubiquinone oxidoreductase chain 5 (ND5).